The primary structure comprises 306 residues: 1-aminocyclopropane-1-carboxylate oxidase (306 aa).

A Fe2OG dioxygenase domain is found at 153-253; the sequence is PFFGTKVSHY…RRSIASFYNP (101 aa). The Fe cation site is built by histidine 177, aspartate 179, and histidine 234.

The protein belongs to the iron/ascorbate-dependent oxidoreductase family. Fe cation serves as cofactor.

It carries out the reaction 1-aminocyclopropane-1-carboxylate + L-ascorbate + O2 = ethene + L-dehydroascorbate + hydrogen cyanide + CO2 + 2 H2O. Its pathway is alkene biosynthesis; ethylene biosynthesis via S-adenosyl-L-methionine; ethylene from S-adenosyl-L-methionine: step 2/2. In Musa acuminata (Banana), this protein is 1-aminocyclopropane-1-carboxylate oxidase (MAO1B).